Consider the following 321-residue polypeptide: Lipoyl synthase (321 aa).

[4Fe-4S] cluster contacts are provided by cysteine 68, cysteine 73, cysteine 79, cysteine 94, cysteine 98, cysteine 101, and serine 308. The Radical SAM core domain occupies 80–297 (FNHGTATFMI…KAEAMAMGFT (218 aa)).

Belongs to the radical SAM superfamily. Lipoyl synthase family. [4Fe-4S] cluster is required as a cofactor.

It localises to the cytoplasm. It carries out the reaction [[Fe-S] cluster scaffold protein carrying a second [4Fe-4S](2+) cluster] + N(6)-octanoyl-L-lysyl-[protein] + 2 oxidized [2Fe-2S]-[ferredoxin] + 2 S-adenosyl-L-methionine + 4 H(+) = [[Fe-S] cluster scaffold protein] + N(6)-[(R)-dihydrolipoyl]-L-lysyl-[protein] + 4 Fe(3+) + 2 hydrogen sulfide + 2 5'-deoxyadenosine + 2 L-methionine + 2 reduced [2Fe-2S]-[ferredoxin]. It functions in the pathway protein modification; protein lipoylation via endogenous pathway; protein N(6)-(lipoyl)lysine from octanoyl-[acyl-carrier-protein]: step 2/2. Catalyzes the radical-mediated insertion of two sulfur atoms into the C-6 and C-8 positions of the octanoyl moiety bound to the lipoyl domains of lipoate-dependent enzymes, thereby converting the octanoylated domains into lipoylated derivatives. The polypeptide is Lipoyl synthase (Yersinia pseudotuberculosis serotype O:1b (strain IP 31758)).